The following is a 102-amino-acid chain: Urease subunit beta (102 aa).

It belongs to the urease beta subunit family. As to quaternary structure, heterotrimer of UreA (gamma), UreB (beta) and UreC (alpha) subunits. Three heterotrimers associate to form the active enzyme.

It is found in the cytoplasm. The catalysed reaction is urea + 2 H2O + H(+) = hydrogencarbonate + 2 NH4(+). It functions in the pathway nitrogen metabolism; urea degradation; CO(2) and NH(3) from urea (urease route): step 1/1. The protein is Urease subunit beta of Opitutus terrae (strain DSM 11246 / JCM 15787 / PB90-1).